Reading from the N-terminus, the 262-residue chain is Hydroxyethylthiazole kinase (262 aa).

Methionine 39 provides a ligand contact to substrate. Lysine 115 and threonine 160 together coordinate ATP. Glycine 187 contributes to the substrate binding site.

This sequence belongs to the Thz kinase family. Requires Mg(2+) as cofactor.

It carries out the reaction 5-(2-hydroxyethyl)-4-methylthiazole + ATP = 4-methyl-5-(2-phosphooxyethyl)-thiazole + ADP + H(+). The protein operates within cofactor biosynthesis; thiamine diphosphate biosynthesis; 4-methyl-5-(2-phosphoethyl)-thiazole from 5-(2-hydroxyethyl)-4-methylthiazole: step 1/1. Catalyzes the phosphorylation of the hydroxyl group of 4-methyl-5-beta-hydroxyethylthiazole (THZ). The polypeptide is Hydroxyethylthiazole kinase (Staphylococcus epidermidis (strain ATCC 35984 / DSM 28319 / BCRC 17069 / CCUG 31568 / BM 3577 / RP62A)).